A 71-amino-acid polypeptide reads, in one-letter code: Protein SlyX homolog (71 aa).

Belongs to the SlyX family.

The sequence is that of Protein SlyX homolog from Thioalkalivibrio sulfidiphilus (strain HL-EbGR7).